A 422-amino-acid chain; its full sequence is Histidine--tRNA ligase (422 aa).

This sequence belongs to the class-II aminoacyl-tRNA synthetase family. In terms of assembly, homodimer.

It is found in the cytoplasm. The catalysed reaction is tRNA(His) + L-histidine + ATP = L-histidyl-tRNA(His) + AMP + diphosphate + H(+). This chain is Histidine--tRNA ligase, found in Vibrio campbellii (strain ATCC BAA-1116).